The chain runs to 168 residues: Ribosome maturation factor RimM (168 aa).

In terms of domain architecture, PRC barrel spans 96–168 (EDEYFITDLI…VMIVRLLEGL (73 aa)).

This sequence belongs to the RimM family. In terms of assembly, binds ribosomal protein uS19.

The protein localises to the cytoplasm. Functionally, an accessory protein needed during the final step in the assembly of 30S ribosomal subunit, possibly for assembly of the head region. Essential for efficient processing of 16S rRNA. May be needed both before and after RbfA during the maturation of 16S rRNA. It has affinity for free ribosomal 30S subunits but not for 70S ribosomes. This is Ribosome maturation factor RimM from Caldanaerobacter subterraneus subsp. tengcongensis (strain DSM 15242 / JCM 11007 / NBRC 100824 / MB4) (Thermoanaerobacter tengcongensis).